The following is a 196-amino-acid chain: Glycerol-3-phosphate acyltransferase (196 aa).

5 helical membrane-spanning segments follow: residues 1 to 21, 55 to 75, 81 to 101, 118 to 138, and 140 to 160; these read MIIF…SISG, IAIF…WLGT, PIYL…PIYF, AISI…VYLF, and YASL…WYIQ.

It belongs to the PlsY family. As to quaternary structure, probably interacts with PlsX.

Its subcellular location is the cell inner membrane. It carries out the reaction an acyl phosphate + sn-glycerol 3-phosphate = a 1-acyl-sn-glycero-3-phosphate + phosphate. It functions in the pathway lipid metabolism; phospholipid metabolism. In terms of biological role, catalyzes the transfer of an acyl group from acyl-phosphate (acyl-PO(4)) to glycerol-3-phosphate (G3P) to form lysophosphatidic acid (LPA). This enzyme utilizes acyl-phosphate as fatty acyl donor, but not acyl-CoA or acyl-ACP. In Blochmanniella floridana, this protein is Glycerol-3-phosphate acyltransferase.